Consider the following 546-residue polypeptide: 2-isopropylmalate synthase (546 aa).

One can recognise a Pyruvate carboxyltransferase domain in the interval 8 to 271 (ILIFDTTLRD…NSFFGRSSDS (264 aa)). Residues Asp17, His208, His210, and Asn244 each contribute to the Mn(2+) site. The segment at 408 to 546 (QLSHVQVSCG…KNKVLSNPKK (139 aa)) is regulatory domain.

It belongs to the alpha-IPM synthase/homocitrate synthase family. LeuA type 1 subfamily. Homodimer. It depends on Mn(2+) as a cofactor.

It is found in the cytoplasm. The enzyme catalyses 3-methyl-2-oxobutanoate + acetyl-CoA + H2O = (2S)-2-isopropylmalate + CoA + H(+). It functions in the pathway amino-acid biosynthesis; L-leucine biosynthesis; L-leucine from 3-methyl-2-oxobutanoate: step 1/4. Catalyzes the condensation of the acetyl group of acetyl-CoA with 3-methyl-2-oxobutanoate (2-ketoisovalerate) to form 3-carboxy-3-hydroxy-4-methylpentanoate (2-isopropylmalate). This Prochlorococcus marinus subsp. pastoris (strain CCMP1986 / NIES-2087 / MED4) protein is 2-isopropylmalate synthase.